The primary structure comprises 277 residues: Glutamate racemase (277 aa).

Substrate contacts are provided by residues 9 to 10 and 41 to 42; these read DS and YG. Cys-73 acts as the Proton donor/acceptor in catalysis. Substrate is bound at residue 74-75; the sequence is NT. The active-site Proton donor/acceptor is the Cys-183. Substrate is bound at residue 184-185; the sequence is TH.

This sequence belongs to the aspartate/glutamate racemases family.

It catalyses the reaction L-glutamate = D-glutamate. Its pathway is cell wall biogenesis; peptidoglycan biosynthesis. Its function is as follows. Provides the (R)-glutamate required for cell wall biosynthesis. This Shewanella denitrificans (strain OS217 / ATCC BAA-1090 / DSM 15013) protein is Glutamate racemase.